A 413-amino-acid chain; its full sequence is CinA-like protein (413 aa).

Belongs to the CinA family.

This chain is CinA-like protein, found in Geobacter sulfurreducens (strain ATCC 51573 / DSM 12127 / PCA).